Reading from the N-terminus, the 270-residue chain is Cerberus (270 aa).

The first 20 residues, 1–20 (MLLNVLRICIIVCLVNDGAG), serve as a signal peptide directing secretion. 3 N-linked (GlcNAc...) asparagine glycosylation sites follow: Asn103, Asn112, and Asn154. Intrachain disulfides connect Cys169-Cys215, Cys183-Cys229, Cys193-Cys245, and Cys197-Cys247. The 85-residue stretch at 169–253 (CKTLPFTQNI…ECTCEAHKSN (85 aa)) folds into the CTCK domain. An N-linked (GlcNAc...) asparagine glycan is attached at Asn228.

This sequence belongs to the DAN family. The long chain interacts with nodal/nr-1, bmp4 and wnt8, thereby inhibiting their function. The short chain interacts with nodal/nr-1 but not bmp4 or wnt8. A component of the Nieuwkoop signaling center in the blastula. Expressed transiently in a broad anterior domain of the gastrula, including the anterior endoderm of the Spemann's organizer and more laterally the cardiac primordia. Expression is excluded from the prospective prechordal plate region and the ring of cells that give rise to the trunk-tail mesoderm.

It localises to the secreted. In terms of biological role, inhibits wnt, nodal/nr-1 and bmp signaling in the embryo to promote head formation and anterior neural induction. Within the endoderm, acts as an essential mediator of nodal/nr-1-induced cardiogenesis in the overlying mesoderm. The polypeptide is Cerberus (Xenopus laevis (African clawed frog)).